Reading from the N-terminus, the 71-residue chain is UPF0346 protein BCB4264_A2283 (71 aa).

This sequence belongs to the UPF0346 family.

The protein is UPF0346 protein BCB4264_A2283 of Bacillus cereus (strain B4264).